The sequence spans 37 residues: Large ribosomal subunit protein bL36 (37 aa).

Belongs to the bacterial ribosomal protein bL36 family.

The polypeptide is Large ribosomal subunit protein bL36 (Vesicomyosocius okutanii subsp. Calyptogena okutanii (strain HA)).